We begin with the raw amino-acid sequence, 97 residues long: Coiled-coil domain-containing protein 167 (97 aa).

Residues 10–79 are a coiled coil; the sequence is GVALEIDGLE…LRQENRKNML (70 aa). A helical membrane pass occupies residues 77-97; it reads NMLLSVAIFLLLTVIYAYWAL.

The protein resides in the membrane. In Bos taurus (Bovine), this protein is Coiled-coil domain-containing protein 167 (CCDC167).